A 551-amino-acid polypeptide reads, in one-letter code: Synapse-associated protein of 47 kDa (551 aa).

Disordered stretches follow at residues 20-72 and 117-198; these read AGDE…AGKR and AMPA…GQGK. Composition is skewed to low complexity over residues 26–59, 117–128, and 137–146; these read PAPT…AAAA, AMPAMPSIPSIP, and DGAEGAEGAV. Phosphoserine is present on residues S178 and S182. A compositionally biased stretch (gly residues) spans 182–197; it reads SGGGTPTGDEGQIGQG. Phosphothreonine is present on T186. The region spanning 295–347 is the BSD domain; that stretch reads VDFEFSYDTAYPTAIAIMAEDKALETMRFELVPKIITEENFWRNYFYRVSLII. Residues 360-391 form a disordered region; sequence VGQASSGEDANEVATKEKKSKTAEPAKGDSSV. Basic and acidic residues predominate over residues 373-386; it reads ATKEKKSKTAEPAK. At S433 the chain carries Phosphoserine. A disordered region spans residues 487–551; it reads KDYEVVDEGG…DLIEDTDDLK (65 aa). The segment covering 514–523 has biased composition (acidic residues); that stretch reads DDTEADEDEP. The segment covering 524–535 has biased composition (polar residues); the sequence is TISNLRTRSTNN. Residue T530 is modified to Phosphothreonine. Residues 536 to 551 show a composition bias toward acidic residues; it reads DWEEYADLIEDTDDLK.

In terms of tissue distribution, expressed specifically in neurons and transported to synaptic terminals.

In Drosophila melanogaster (Fruit fly), this protein is Synapse-associated protein of 47 kDa (Sap47).